The sequence spans 95 residues: Co-chaperonin GroES (95 aa).

The protein belongs to the GroES chaperonin family. In terms of assembly, heptamer of 7 subunits arranged in a ring. Interacts with the chaperonin GroEL.

It localises to the cytoplasm. In terms of biological role, together with the chaperonin GroEL, plays an essential role in assisting protein folding. The GroEL-GroES system forms a nano-cage that allows encapsulation of the non-native substrate proteins and provides a physical environment optimized to promote and accelerate protein folding. GroES binds to the apical surface of the GroEL ring, thereby capping the opening of the GroEL channel. In Neisseria meningitidis serogroup C (strain 053442), this protein is Co-chaperonin GroES.